Reading from the N-terminus, the 90-residue chain is Succinate dehydrogenase subunit 7, mitochondrial (90 aa).

The N-terminal 41 residues, 1 to 41, are a transit peptide targeting the mitochondrion; sequence MAQPAFLSALRSRLRSPQPQAPALPHLQPPRRGFHVELGAR.

In terms of assembly, component of complex II composed of eight subunits in plants: four classical SDH subunits SDH1, SDH2, SDH3 and SDH4 (a flavoprotein (FP), an iron-sulfur protein (IP), and a cytochrome b composed of a large and a small subunit.), as well as four subunits unknown in mitochondria from bacteria and heterotrophic eukaryotes.

The protein resides in the mitochondrion inner membrane. It functions in the pathway carbohydrate metabolism; tricarboxylic acid cycle. In Oryza sativa subsp. japonica (Rice), this protein is Succinate dehydrogenase subunit 7, mitochondrial.